Consider the following 189-residue polypeptide: Large ribosomal subunit protein uL5 (189 aa).

Belongs to the universal ribosomal protein uL5 family. Part of the 50S ribosomal subunit; part of the 5S rRNA/L5/L18/L25 subcomplex. Contacts the 5S rRNA and the P site tRNA. Forms a bridge to the 30S subunit in the 70S ribosome.

Functionally, this is one of the proteins that bind and probably mediate the attachment of the 5S RNA into the large ribosomal subunit, where it forms part of the central protuberance. In the 70S ribosome it contacts protein S13 of the 30S subunit (bridge B1b), connecting the 2 subunits; this bridge is implicated in subunit movement. Contacts the P site tRNA; the 5S rRNA and some of its associated proteins might help stabilize positioning of ribosome-bound tRNAs. This chain is Large ribosomal subunit protein uL5, found in Kineococcus radiotolerans (strain ATCC BAA-149 / DSM 14245 / SRS30216).